Reading from the N-terminus, the 139-residue chain is ATP synthase epsilon chain, chloroplastic (139 aa).

Belongs to the ATPase epsilon chain family. In terms of assembly, F-type ATPases have 2 components, CF(1) - the catalytic core - and CF(0) - the membrane proton channel. CF(1) has five subunits: alpha(3), beta(3), gamma(1), delta(1), epsilon(1). CF(0) has three main subunits: a, b and c.

The protein resides in the plastid. The protein localises to the chloroplast thylakoid membrane. Functionally, produces ATP from ADP in the presence of a proton gradient across the membrane. The polypeptide is ATP synthase epsilon chain, chloroplastic (Dictyota dichotoma).